Reading from the N-terminus, the 317-residue chain is Acetyl-coenzyme A carboxylase carboxyl transferase subunit alpha (317 aa).

Positions Arg39–Asp293 constitute a CoA carboxyltransferase C-terminal domain.

Belongs to the AccA family. As to quaternary structure, acetyl-CoA carboxylase is a heterohexamer composed of biotin carboxyl carrier protein (AccB), biotin carboxylase (AccC) and two subunits each of ACCase subunit alpha (AccA) and ACCase subunit beta (AccD).

The protein resides in the cytoplasm. The enzyme catalyses N(6)-carboxybiotinyl-L-lysyl-[protein] + acetyl-CoA = N(6)-biotinyl-L-lysyl-[protein] + malonyl-CoA. The protein operates within lipid metabolism; malonyl-CoA biosynthesis; malonyl-CoA from acetyl-CoA: step 1/1. Its function is as follows. Component of the acetyl coenzyme A carboxylase (ACC) complex. First, biotin carboxylase catalyzes the carboxylation of biotin on its carrier protein (BCCP) and then the CO(2) group is transferred by the carboxyltransferase to acetyl-CoA to form malonyl-CoA. In Agrobacterium fabrum (strain C58 / ATCC 33970) (Agrobacterium tumefaciens (strain C58)), this protein is Acetyl-coenzyme A carboxylase carboxyl transferase subunit alpha.